We begin with the raw amino-acid sequence, 211 residues long: Histone H1-beta, late embryonic (211 aa).

Disordered regions lie at residues 1–22 (MAAE…PSSS) and 81–211 (KGAS…AAKK). The 75-residue stretch at 17–91 (AHPSSSEMVL…GASGSFKLGK (75 aa)) folds into the H15 domain. Composition is skewed to basic and acidic residues over residues 95–107 (GKSD…DAAK) and 114–123 (KKKEAKEKKA). Composition is skewed to basic residues over residues 124-177 (ARSK…KKAA) and 185-211 (KAAK…AAKK).

Belongs to the histone H1/H5 family.

The protein resides in the nucleus. It is found in the chromosome. Its function is as follows. Histones H1 are necessary for the condensation of nucleosome chains into higher-order structures. The chain is Histone H1-beta, late embryonic from Strongylocentrotus purpuratus (Purple sea urchin).